A 475-amino-acid chain; its full sequence is Ribulose bisphosphate carboxylase large chain (475 aa).

Residues 1–2 constitute a propeptide that is removed on maturation; it reads MS. N-acetylproline is present on P3. An N6,N6,N6-trimethyllysine modification is found at K14. Positions 123 and 173 each coordinate substrate. The active-site Proton acceptor is K175. A substrate-binding site is contributed by K177. 3 residues coordinate Mg(2+): K201, D203, and E204. K201 is subject to N6-carboxylysine. The Proton acceptor role is filled by H294. Substrate is bound by residues R295, H327, and S379.

The protein belongs to the RuBisCO large chain family. Type I subfamily. As to quaternary structure, heterohexadecamer of 8 large chains and 8 small chains; disulfide-linked. The disulfide link is formed within the large subunit homodimers. Requires Mg(2+) as cofactor. The disulfide bond which can form in the large chain dimeric partners within the hexadecamer appears to be associated with oxidative stress and protein turnover.

Its subcellular location is the plastid. It localises to the chloroplast. The catalysed reaction is 2 (2R)-3-phosphoglycerate + 2 H(+) = D-ribulose 1,5-bisphosphate + CO2 + H2O. The enzyme catalyses D-ribulose 1,5-bisphosphate + O2 = 2-phosphoglycolate + (2R)-3-phosphoglycerate + 2 H(+). Its function is as follows. RuBisCO catalyzes two reactions: the carboxylation of D-ribulose 1,5-bisphosphate, the primary event in carbon dioxide fixation, as well as the oxidative fragmentation of the pentose substrate in the photorespiration process. Both reactions occur simultaneously and in competition at the same active site. The protein is Ribulose bisphosphate carboxylase large chain of Betula papyrifera (Paper birch).